Consider the following 413-residue polypeptide: N-acylneuraminate cytidylyltransferase (413 aa).

It belongs to the CMP-NeuNAc synthase family. Mg(2+) is required as a cofactor. Mn(2+) serves as cofactor.

Its subcellular location is the cytoplasm. The enzyme catalyses an N-acylneuraminate + CTP = a CMP-N-acyl-beta-neuraminate + diphosphate. In terms of biological role, catalyzes the formation of CMP-N-acetylneuraminic acid (CMP-NeuNAc), which is essential for the formation of the capsule. The polypeptide is N-acylneuraminate cytidylyltransferase (neuA) (Streptococcus agalactiae serotype V (strain ATCC BAA-611 / 2603 V/R)).